We begin with the raw amino-acid sequence, 516 residues long: Flagellar radial spoke protein 3 (516 aa).

Polar residues-rich tracts occupy residues 1 to 11 (MVQAKAQQQLY) and 62 to 74 (ATQT…SPAS). Disordered stretches follow at residues 1–32 (MVQA…EDET), 60–90 (ADAT…TPEA), 388–412 (NAKW…AAEE), and 424–447 (AAAE…DGVE). Over residues 391–412 (WEADKAEAAEKARAEAEAAAEE) the composition is skewed to basic and acidic residues.

Belongs to the flagellar radial spoke RSP3 family. As to quaternary structure, interacts with FAP91. Protein 3 is one of the 5 radial spoke proteins that are phosphorylated. In terms of processing, protein 3a might only differ from protein 3 in being unphosphorylated.

The protein resides in the cytoplasm. Its subcellular location is the cytoskeleton. The protein localises to the flagellum axoneme. Functionally, protein 3 may attach the radial spoke to the outer doublet microtubule or is required to form a stable spoke structure. In terms of biological role, flagellar radial spokes contribute to the regulation of dynein arm activity and thus the pattern of flagellar bending. They consist of a thin stalk, which is attached to the a subfiber of the outer doublet microtubule, and a bulbous head, which is attached to the stalk and appears to interact with the projections from the central pair of microtubules. This is Flagellar radial spoke protein 3 from Chlamydomonas reinhardtii (Chlamydomonas smithii).